Reading from the N-terminus, the 498-residue chain is MRTNPTTSPPGASTIEEKSTGRIDQIIGPVLDVTFPPGKLPYIYNALVVQSRDTDDKQINVTCEVQQLLGNNRVRAVAMSATDGLMRGMEVIDTGAPLSVPVGGATLGRIFNVLGEPVDNLGPVDSSATFPIHRSAPAFIELDTKLSIFETGIKVVDLLAPYRRGGKIGLFGGAGVGKTVLIMELINNIAKAHGGVSVFGGVGERTREGNDLYMEMKESGVINEKNIEESKVALVYGQMNEPPGARMRVGLTALTMAEYFRDVNKQDVLLFIDNIFRFVQAGSEVSALLGRMPSAVGYQPTLSTEMGSLQERIASTKKGSITSIQAVYVPADDLTDPAPATTFAHLDATTVLSRGLASKGIYPAVDPLDSTSTMLQPRIVGNEHYETAQRVKETLQRYKELQDIIAILGLDELSEEDRLTVARARKIERFLSQPFFVAEVFTGSPGKYVALAETIRGFQLILSGELDGLPEQAFYLVGNIDEASTKAITLEEENKSQK.

G172–T179 contributes to the ATP binding site.

This sequence belongs to the ATPase alpha/beta chains family. F-type ATPases have 2 components, CF(1) - the catalytic core - and CF(0) - the membrane proton channel. CF(1) has five subunits: alpha(3), beta(3), gamma(1), delta(1), epsilon(1). CF(0) has four main subunits: a(1), b(1), b'(1) and c(9-12).

It is found in the plastid. The protein localises to the chloroplast thylakoid membrane. It carries out the reaction ATP + H2O + 4 H(+)(in) = ADP + phosphate + 5 H(+)(out). Its function is as follows. Produces ATP from ADP in the presence of a proton gradient across the membrane. The catalytic sites are hosted primarily by the beta subunits. The sequence is that of ATP synthase subunit beta, chloroplastic from Triticum aestivum (Wheat).